The following is a 542-amino-acid chain: Beta-amylase 2, chloroplastic (542 aa).

A chloroplast-targeting transit peptide spans 1-55 (MAIRLNHSVIPVSVKLGAPTRVSARSSLPFSVGDWRGVSTFSGARPLVLAKVKLR). Substrate-binding residues include Asp136, His176, and Asp184. Glu269 (proton donor) is an active-site residue. Substrate is bound by residues Lys377, His382, and Thr424. Glu465 acts as the Proton acceptor in catalysis. Substrate contacts are provided by residues 466-467 (NA) and Arg501.

This sequence belongs to the glycosyl hydrolase 14 family.

The protein resides in the plastid. It localises to the chloroplast. It catalyses the reaction Hydrolysis of (1-&gt;4)-alpha-D-glucosidic linkages in polysaccharides so as to remove successive maltose units from the non-reducing ends of the chains.. Redox regulation; active in reducing conditions, inactive in oxidizing conditions. Its function is as follows. Low beta-amylase activity. Interacts poorly with starch or other alpha-1,4-glucan. This chain is Beta-amylase 2, chloroplastic (BAM2), found in Arabidopsis thaliana (Mouse-ear cress).